The primary structure comprises 308 residues: MFSGKVRAFIDEELFHSNRNNSSDGLSLDTPLAIHTPAKGFDADLSPQSLYDLHTVTTPVTPLAPDEWDFSLDQSSGVIPSPSSFLSDHNNNNLFSDDTISRQYSNTDDINPSDFGGQCAILDSQNFTLSNASTKSKWSFTKHGSNTPSDSSSPLCNSSKRVVGMLRRFLPSSRMVRLSKAHQPLRIPTTGVSLDSADLTPLSVSTSHLNHPSTSNSPDPLYSASQPPSIKTDASPVDIKNMDAAEKLKKIDLLLEEILQLDSAYDAAERRMIESGWSSVDEIRDVHNKRLDAWSEWKQKLLPLKKCC.

2 stretches are compositionally biased toward polar residues: residues 138–148 (WSFTKHGSNTP) and 205–229 (STSH…QPPS). 2 disordered regions span residues 138 to 157 (WSFT…PLCN) and 205 to 235 (STSH…TDAS).

The protein resides in the cytoplasm. This is an uncharacterized protein from Schizosaccharomyces pombe (strain 972 / ATCC 24843) (Fission yeast).